The following is a 207-amino-acid chain: MSTKPDMIQKCLWLEILMGIFIAGTLSLDCNLLNVHLRRVTWQNLRHLSSMSNSFPVECLRENIAFELPQEFLQYTQPMKRDIKKAFYEMSLQAFNIFSQHTFKYWKERHLKQIQIGLDQQAEYLNQCLEEDKNENEDMKEMKENEMKPSEARVPQLSSLELRRYFHRIDNFLKEKKYSDCAWEIVRVEIRRCLYYFYKFTALFRRK.

Residues 1–27 (MSTKPDMIQKCLWLEILMGIFIAGTLS) form the signal peptide. 2 cysteine pairs are disulfide-bonded: Cys-30-Cys-128 and Cys-59-Cys-181. Residues 118 to 148 (LDQQAEYLNQCLEEDKNENEDMKEMKENEMK) are a coiled coil.

This sequence belongs to the alpha/beta interferon family. In terms of tissue distribution, expressed in keratinocytes, monocytes and in resting dendritic cells.

The protein localises to the secreted. In terms of biological role, may play a role in the regulation of immune cell function. Cytokine that imparts cellular protection against viral infection in a species-specific manner. Activates the interferon-stimulated response element signaling pathway. It is able to directly modulate cytokine release from monocytes and dendritic cells. Binds heparin. This is Interferon kappa (IFNK) from Homo sapiens (Human).